Consider the following 35-residue polypeptide: MEVNIFGLTATALFIIIPTSFLLILYVKTASNQSV.

The helical transmembrane segment at 5-25 threads the bilayer; the sequence is IFGLTATALFIIIPTSFLLIL.

The protein belongs to the PsbM family. PSII is composed of 1 copy each of membrane proteins PsbA, PsbB, PsbC, PsbD, PsbE, PsbF, PsbH, PsbI, PsbJ, PsbK, PsbL, PsbM, PsbT, PsbX, PsbY, PsbZ, Psb30/Ycf12, at least 3 peripheral proteins of the oxygen-evolving complex and a large number of cofactors. It forms dimeric complexes.

It localises to the plastid. It is found in the chloroplast thylakoid membrane. One of the components of the core complex of photosystem II (PSII). PSII is a light-driven water:plastoquinone oxidoreductase that uses light energy to abstract electrons from H(2)O, generating O(2) and a proton gradient subsequently used for ATP formation. It consists of a core antenna complex that captures photons, and an electron transfer chain that converts photonic excitation into a charge separation. This subunit is found at the monomer-monomer interface. The chain is Photosystem II reaction center protein M from Tetradesmus obliquus (Green alga).